The primary structure comprises 123 residues: uncharacterized protein (123 aa).

The chain crosses the membrane as a helical span at residues 34 to 53 (LPFFFLFLGNLGKFFFLWPL).

It localises to the membrane. This is an uncharacterized protein from Saccharomyces cerevisiae (strain ATCC 204508 / S288c) (Baker's yeast).